A 199-amino-acid chain; its full sequence is MLYIFDLGNVIVDIDFNRVLGAWSDLTRIPLASLKKSFHMGEAFHQHERGEISDEAFAEALCHEMALPLSYEQFSHGWQAVFVALRPEVIAIMHKLREQGHRVVVLSNTNRLHTTFWPEEYPEIRDAADHIYLSQDLGMRKPEARIYQHVLQAEGFSPSDTVFFDDNADNIEGANQLGITSILVKDKTTIPDYFAKVLC.

Catalysis depends on Asp6, which acts as the Nucleophile. Position 6 (Asp6) interacts with Mg(2+). Residues 6–8, 107–108, Lys141, and Asp166 each bind substrate; these read DLG and SN. Residue Asp166 participates in Mg(2+) binding.

Belongs to the HAD-like hydrolase superfamily. YihX family. Mg(2+) is required as a cofactor. Mn(2+) serves as cofactor. Requires Co(2+) as cofactor. It depends on Zn(2+) as a cofactor.

It carries out the reaction alpha-D-glucose 1-phosphate + H2O = D-glucose + phosphate. In terms of biological role, catalyzes the dephosphorylation of alpha-D-glucose 1-phosphate (Glc1P) and, to a lesser extent, of other sugar phosphates. Has no activity with the beta form of Glc1P. In addition, YihX has significant phosphatase activity against pyridoxal phosphate (PLP) and low beta-phosphoglucomutase activity. This chain is Alpha-D-glucose 1-phosphate phosphatase YihX (yihX), found in Escherichia coli (strain K12).